Consider the following 470-residue polypeptide: UDP-glycosyltransferase 91A1 (470 aa).

Residues Ser290, Val350–Gln352, His367–Glu375, and Val389–Gln392 contribute to the UDP-alpha-D-glucose site.

This sequence belongs to the UDP-glycosyltransferase family.

This Arabidopsis thaliana (Mouse-ear cress) protein is UDP-glycosyltransferase 91A1 (UGT91A1).